Consider the following 146-residue polypeptide: 3-dehydroquinate dehydratase (146 aa).

Tyr24 (proton acceptor) is an active-site residue. Substrate is bound by residues Asn73, His79, and Asp86. Residue His99 is the Proton donor of the active site. Residues 100–101 (LS) and Arg110 contribute to the substrate site.

The protein belongs to the type-II 3-dehydroquinase family. Homododecamer.

The enzyme catalyses 3-dehydroquinate = 3-dehydroshikimate + H2O. Its pathway is metabolic intermediate biosynthesis; chorismate biosynthesis; chorismate from D-erythrose 4-phosphate and phosphoenolpyruvate: step 3/7. In terms of biological role, catalyzes a trans-dehydration via an enolate intermediate. This Shewanella baltica (strain OS185) protein is 3-dehydroquinate dehydratase.